Reading from the N-terminus, the 456-residue chain is N(6)-adenosine-methyltransferase non-catalytic subunit METTL14 (456 aa).

Residues 50–75 (TCRASYDTSAPNAKRKYLDEGETDED) are disordered. Interaction with METTL3 stretches follow at residues 135–136 (RD) and 237–238 (SG). The segment at 245 to 254 (RVCLRKWGYR) is positively charged region required for RNA-binding. Interaction with METTL3 stretches follow at residues 255–258 (RCED) and 278–287 (KAVFQRTKEH). The tract at residues 297-298 (KR) is positively charged region required for RNA-binding. The interaction with METTL3 stretch occupies residues 308 to 312 (NVDID). The segment at 393–456 (ERLRPKSPPP…GAHRGGFPPR (64 aa)) is disordered. Ser-399 bears the Phosphoserine mark. The span at 409 to 423 (GGGAPRGGGRGGTSA) shows a compositional bias: gly residues. A compositionally biased stretch (basic and acidic residues) spans 425-440 (RGRERNRSNFRGERGG). Positions 441–450 (FRGGRGGAHR) are enriched in gly residues.

The protein belongs to the MT-A70-like family. Heterodimer; heterodimerizes with METTL3 to form an antiparallel heterodimer that constitutes an active methyltransferase. Component of the WMM complex, a N6-methyltransferase complex composed of a catalytic subcomplex, named MAC, and of an associated subcomplex, named MACOM. The MAC subcomplex is composed of METTL3 and METTL14. The MACOM subcomplex is composed of WTAP, ZC3H13, CBLL1/HAKAI, VIRMA, and, in some cases of RBM15 (RBM15 or RBM15B).

It localises to the nucleus. In terms of biological role, the METTL3-METTL14 heterodimer forms a N6-methyltransferase complex that methylates adenosine residues at the N(6) position of some mRNAs and regulates the circadian clock, differentiation of embryonic stem cells and cortical neurogenesis. In the heterodimer formed with METTL3, METTL14 constitutes the RNA-binding scaffold that recognizes the substrate rather than the catalytic core. N6-methyladenosine (m6A), which takes place at the 5'-[AG]GAC-3' consensus sites of some mRNAs, plays a role in mRNA stability and processing. M6A acts as a key regulator of mRNA stability by promoting mRNA destabilization and degradation. In embryonic stem cells (ESCs), m6A methylation of mRNAs encoding key naive pluripotency-promoting transcripts results in transcript destabilization. M6A regulates spermatogonial differentiation and meiosis and is essential for male fertility and spermatogenesis. M6A also regulates cortical neurogenesis: m6A methylation of transcripts related to transcription factors, neural stem cells, the cell cycle and neuronal differentiation during brain development promotes their destabilization and decay, promoting differentiation of radial glial cells. The chain is N(6)-adenosine-methyltransferase non-catalytic subunit METTL14 from Homo sapiens (Human).